We begin with the raw amino-acid sequence, 125 residues long: Type II secretion system protein I (125 aa).

Residues 1 to 5 (MKQQG) constitute a propeptide, leader sequence. At Met6 the chain carries N-methylmethionine. Residues 6–26 (MTLLEVMVALVIFALAGLTVL) form a helical membrane-spanning segment.

This sequence belongs to the GSP I family. Type II secretion is composed of four main components: the outer membrane complex, the inner membrane complex, the cytoplasmic secretion ATPase and the periplasm-spanning pseudopilus. Interacts with core component OutG. In terms of processing, cleaved by prepilin peptidase. Methylated by prepilin peptidase at the amino group of the N-terminal methionine once the leader sequence is cleaved by prepilin peptidase.

The protein resides in the cell inner membrane. Its function is as follows. Component of the type II secretion system required for the energy-dependent secretion of extracellular factors such as proteases and toxins from the periplasm. Part of the pseudopilus tip complex that is critical for the recognition and binding of secretion substrates. In Dickeya chrysanthemi (Pectobacterium chrysanthemi), this protein is Type II secretion system protein I (outI).